The chain runs to 297 residues: Homoserine kinase (297 aa).

82–92 (PVSRGLGSSAA) is an ATP binding site.

It belongs to the GHMP kinase family. Homoserine kinase subfamily.

It is found in the cytoplasm. It carries out the reaction L-homoserine + ATP = O-phospho-L-homoserine + ADP + H(+). It functions in the pathway amino-acid biosynthesis; L-threonine biosynthesis; L-threonine from L-aspartate: step 4/5. Catalyzes the ATP-dependent phosphorylation of L-homoserine to L-homoserine phosphate. In Clostridium botulinum (strain ATCC 19397 / Type A), this protein is Homoserine kinase.